Consider the following 330-residue polypeptide: Polygalacturonase inhibitor 1 (330 aa).

An N-terminal signal peptide occupies residues 1 to 21; the sequence is MDKTATLCLLFLFTFLTTCLS. 2 disulfides stabilise this stretch: Cys-25–Cys-55 and Cys-56–Cys-63. 10 LRR repeats span residues 69-93, 94-117, 118-142, 143-166, 167-189, 191-215, 217-237, 238-260, 261-285, and 287-309; these read NHRV…VGDL, PYLE…TIAK, LKNL…ISQL, KNLE…LSTL, PKIL…SFGS, PGTV…LGNI, FNRI…LFGS, NKTT…KVDI, PKTL…WTEA, and LQFF…KLQT. N-linked (GlcNAc...) asparagine glycans are attached at residues Asn-106 and Asn-130. Asn-238 is a glycosylation site (N-linked (GlcNAc...) asparagine). Asn-291 carries an N-linked (GlcNAc...) asparagine glycan. Intrachain disulfides connect Cys-298/Cys-320 and Cys-322/Cys-329.

This sequence belongs to the polygalacturonase-inhibiting protein family.

The protein resides in the secreted. It localises to the cell wall. Its subcellular location is the membrane. Its function is as follows. Inhibitor of fungal polygalacturonase. It is an important factor for plant resistance to phytopathogenic fungi. The sequence is that of Polygalacturonase inhibitor 1 (PGIP1) from Arabidopsis thaliana (Mouse-ear cress).